Here is a 500-residue protein sequence, read N- to C-terminus: Probable cytosol aminopeptidase (500 aa).

The Mn(2+) site is built by lysine 265 and aspartate 270. The active site involves lysine 277. Positions 288, 347, and 349 each coordinate Mn(2+). The active site involves arginine 351.

It belongs to the peptidase M17 family. The cofactor is Mn(2+).

Its subcellular location is the cytoplasm. The catalysed reaction is Release of an N-terminal amino acid, Xaa-|-Yaa-, in which Xaa is preferably Leu, but may be other amino acids including Pro although not Arg or Lys, and Yaa may be Pro. Amino acid amides and methyl esters are also readily hydrolyzed, but rates on arylamides are exceedingly low.. The enzyme catalyses Release of an N-terminal amino acid, preferentially leucine, but not glutamic or aspartic acids.. Functionally, presumably involved in the processing and regular turnover of intracellular proteins. Catalyzes the removal of unsubstituted N-terminal amino acids from various peptides. This chain is Probable cytosol aminopeptidase, found in Rickettsia typhi (strain ATCC VR-144 / Wilmington).